Consider the following 193-residue polypeptide: Adenine phosphoribosyltransferase (193 aa).

Belongs to the purine/pyrimidine phosphoribosyltransferase family. Homodimer.

It localises to the cytoplasm. The catalysed reaction is AMP + diphosphate = 5-phospho-alpha-D-ribose 1-diphosphate + adenine. It functions in the pathway purine metabolism; AMP biosynthesis via salvage pathway; AMP from adenine: step 1/1. Functionally, catalyzes a salvage reaction resulting in the formation of AMP, that is energically less costly than de novo synthesis. This is Adenine phosphoribosyltransferase from Bifidobacterium longum subsp. infantis (strain ATCC 15697 / DSM 20088 / JCM 1222 / NCTC 11817 / S12).